We begin with the raw amino-acid sequence, 476 residues long: Serine protease HTRA4 (476 aa).

The signal sequence occupies residues 1–31 (MIRPQLRTAGLGRCLLPGLLLLLVPVLWAGA). One can recognise an IGFBP N-terminal domain in the interval 36–109 (TQPSCPAVCQ…PGFPSTCGCP (74 aa)). 8 disulfide bridges follow: C40–C66, C44–C68, C49–C69, C55–C72, C80–C94, C88–C106, C108–C127, and C116–C152. The Kazal-like domain occupies 88–154 (CAPGLQCLQP…VPVQWGNCGD (67 aa)). The interval 202–362 (GSGFIVSEDG…IPSDRVRQFL (161 aa)) is serine protease. Active-site charge relay system residues include H218, D248, and S326. Residues 383–474 (LQMLSLTVPL…NLLLTVIPET (92 aa)) form the PDZ domain.

Belongs to the peptidase S1C family.

It is found in the secreted. In terms of biological role, serine protease. The polypeptide is Serine protease HTRA4 (HTRA4) (Homo sapiens (Human)).